A 95-amino-acid chain; its full sequence is Co-chaperonin GroES (95 aa).

This sequence belongs to the GroES chaperonin family. In terms of assembly, heptamer of 7 subunits arranged in a ring. Interacts with the chaperonin GroEL.

It localises to the cytoplasm. In terms of biological role, together with the chaperonin GroEL, plays an essential role in assisting protein folding. The GroEL-GroES system forms a nano-cage that allows encapsulation of the non-native substrate proteins and provides a physical environment optimized to promote and accelerate protein folding. GroES binds to the apical surface of the GroEL ring, thereby capping the opening of the GroEL channel. The polypeptide is Co-chaperonin GroES (Rhizorhabdus wittichii (strain DSM 6014 / CCUG 31198 / JCM 15750 / NBRC 105917 / EY 4224 / RW1) (Sphingomonas wittichii)).